A 455-amino-acid chain; its full sequence is Alcohol acyl transferase 1 allele GSb (455 aa).

Residues histidine 164 and asparagine 385 each act as proton acceptor in the active site.

The protein belongs to the plant acyltransferase family. In terms of tissue distribution, expressed at very low levels in the skin of ripe fruit.

In terms of biological role, involved in the biosynthesis of volatile esters which confer ripe apple fruit flavor. Alcohol acyl transferase that can use a wide range of alcohols as substrate to produce esters. The protein is Alcohol acyl transferase 1 allele GSb of Malus domestica (Apple).